Consider the following 196-residue polypeptide: Imidazoleglycerol-phosphate dehydratase (196 aa).

This sequence belongs to the imidazoleglycerol-phosphate dehydratase family.

The protein localises to the cytoplasm. It catalyses the reaction D-erythro-1-(imidazol-4-yl)glycerol 3-phosphate = 3-(imidazol-4-yl)-2-oxopropyl phosphate + H2O. It functions in the pathway amino-acid biosynthesis; L-histidine biosynthesis; L-histidine from 5-phospho-alpha-D-ribose 1-diphosphate: step 6/9. This is Imidazoleglycerol-phosphate dehydratase from Clostridium novyi (strain NT).